Here is a 438-residue protein sequence, read N- to C-terminus: Protein translocase subunit SecY (438 aa).

The next 10 helical transmembrane spans lie at 18-38 (ILFT…PSPG), 76-96 (VGVM…VVIP), 121-141 (IALA…GGLL), 154-174 (IFSL…VMWM), 177-197 (LITE…GIAA), 212-232 (GVIF…VVFV), 269-289 (VIPV…TQLV), 315-335 (PVYI…YVSV), 375-395 (LPGS…LQIG), and 398-418 (GEVQ…GVGL).

Belongs to the SecY/SEC61-alpha family. In terms of assembly, component of the Sec protein translocase complex. Heterotrimer consisting of SecY, SecE and SecG subunits. The heterotrimers can form oligomers, although 1 heterotrimer is thought to be able to translocate proteins. Interacts with the ribosome. Interacts with SecDF, and other proteins may be involved. Interacts with SecA.

It is found in the cell membrane. In terms of biological role, the central subunit of the protein translocation channel SecYEG. Consists of two halves formed by TMs 1-5 and 6-10. These two domains form a lateral gate at the front which open onto the bilayer between TMs 2 and 7, and are clamped together by SecE at the back. The channel is closed by both a pore ring composed of hydrophobic SecY resides and a short helix (helix 2A) on the extracellular side of the membrane which forms a plug. The plug probably moves laterally to allow the channel to open. The ring and the pore may move independently. In Mycobacterium leprae (strain TN), this protein is Protein translocase subunit SecY.